Reading from the N-terminus, the 52-residue chain is Ovomucoid (52 aa).

The 51-residue stretch at Val2–Cys52 folds into the Kazal-like domain. 3 cysteine pairs are disulfide-bonded: Cys4–Cys34, Cys12–Cys31, and Cys20–Cys52. Asn41 carries an N-linked (GlcNAc...) asparagine glycan.

The protein resides in the secreted. This is Ovomucoid from Coturnix delegorguei (Harlequin quail).